A 147-amino-acid chain; its full sequence is MRTTPLAKSSEIERKWYIIDATDVSLGRLSAAVATILRGKNKPQYTPNVDCGDNVIVVNASKIKLTGKKASDKFYYHHSSWRGGLKAVSYGELLANNPVKMVEISVKGMLPKNTLGHQEFLKMHVYAGEDHKHEAQKPEKLDINKLI.

This sequence belongs to the universal ribosomal protein uL13 family. In terms of assembly, part of the 50S ribosomal subunit.

In terms of biological role, this protein is one of the early assembly proteins of the 50S ribosomal subunit, although it is not seen to bind rRNA by itself. It is important during the early stages of 50S assembly. The protein is Large ribosomal subunit protein uL13 of Lactobacillus acidophilus (strain ATCC 700396 / NCK56 / N2 / NCFM).